The sequence spans 604 residues: MSKISDLNYSQHITLADNFKQKSEVLNTWRVGMNDFARIAGGQDNRRNILSPGAFLEFLAKIFTLGYVDFSKRSNEAGRNMMAHIKSSSYSKDTNGNEKMKFYMNNPVGERADSPKVIIEISLSTITTMGTRQGHTAIIFPQPDGSTNRYEGKSFERKDESSLHLITNKVLACYQSEANKKIARLLNNNQELNNLQKLNNLQKLNNLLKLNNIQGLNNPQELNNPQNLNDSQELNNSQELNSPQELNDPQELNNSQDLNNSKVSCTVSVDSTITGLLKEPLNNALLAIRNEHLLLMPHVCDESISYLLGEKGILEEIDKLYALNDHGIDNDKVGNNEINDIKVNLSHILIDSLDDAKVNLTPVIDSILETFSKSPYINDVRILDWCFNKSMQYFDDTKKIKHACSVINHINLRSDQSKIAETLFFNLDKEPYKNSPELQGLIWNKLVVYVNEFNLSNREKTNLIQRLFDNVESIFNEVPVSILVNDIFMNDFFMKNPEMINWYFPQLLKSYEGEKIYFDNLKYDLNDNDKESNKEILKNQPDNVIKEKLNNEYKLRFRMMQTILQSRVNVLPYINEQRLNKLNPPENLRIAIEHFGWKNRPITA.

Positions 239–259 are disordered; the sequence is ELNSPQELNDPQELNNSQDLN.

This is an uncharacterized protein from Escherichia coli (strain K12).